A 430-amino-acid chain; its full sequence is Cyclin-A2 (430 aa).

Methionine 1 is modified (N-acetylmethionine). Disordered stretches follow at residues 1–80 (MLGS…PIND) and 106–129 (EEIQ…FNSA). Position 5 is a phosphoserine (serine 5). Over residues 107-120 (EIQKRPTESKKSES) the composition is skewed to basic and acidic residues.

Belongs to the cyclin family. Cyclin AB subfamily. Interacts with the CDK1 and CDK2 protein kinases to form serine/threonine kinase holoenzyme complexes. Interacts with CDK1 (hyperphosphorylated form in G1 and underphosphorylated forms in S and G2). Interacts with CDK2; the interaction increases from G1 to G2. Interacts (associated with CDK2 but not with CDK1) with SCAPER; regulates the activity of CCNA2/CDK2 by transiently maintaining CCNA2 in the cytoplasm. Forms a ternary complex with CDK2 and CDKN1B; CDKN1B inhibits the kinase activity of CDK2 through conformational rearrangements. Interacts with INCA1. Post-translationally, polyubiquitinated via 'Lys-11'-linked ubiquitin by the anaphase-promoting complex (APC/C), leading to its degradation by the proteasome. Deubiquitinated and stabilized by USP37 enables entry into S phase. Ubiquitinated during the G1 phase by the SCF(FBXO31) complex, leading to its proteasomal degradation.

The protein resides in the nucleus. It is found in the cytoplasm. Its function is as follows. Cyclin which controls both the G1/S and the G2/M transition phases of the cell cycle. Functions through the formation of specific serine/threonine kinase holoenzyme complexes with the cyclin-dependent protein kinases CDK1 and CDK2. The cyclin subunit confers the substrate specificity of these complexes and differentially interacts with and activates CDK1 and CDK2 throughout the cell cycle. This chain is Cyclin-A2, found in Bos taurus (Bovine).